An 886-amino-acid polypeptide reads, in one-letter code: Alanine--tRNA ligase (886 aa).

Zn(2+) is bound by residues H568, H572, C670, and H674.

It belongs to the class-II aminoacyl-tRNA synthetase family. It depends on Zn(2+) as a cofactor.

It is found in the cytoplasm. It carries out the reaction tRNA(Ala) + L-alanine + ATP = L-alanyl-tRNA(Ala) + AMP + diphosphate. In terms of biological role, catalyzes the attachment of alanine to tRNA(Ala) in a two-step reaction: alanine is first activated by ATP to form Ala-AMP and then transferred to the acceptor end of tRNA(Ala). Also edits incorrectly charged Ser-tRNA(Ala) and Gly-tRNA(Ala) via its editing domain. This is Alanine--tRNA ligase from Prochlorococcus marinus (strain NATL2A).